The primary structure comprises 382 residues: Membrane protein MLC1 (382 aa).

A compositionally biased stretch (basic and acidic residues) spans Met-1–Arg-28. Residues Met-1–Leu-43 form a disordered region. The next 4 helical transmembrane spans lie at Trp-58–Leu-78, Tyr-88–Gly-107, Phe-117–Cys-137, and Ile-148–Ile-168. Ser-183, Ser-185, and Ser-188 each carry phosphoserine. The next 4 helical transmembrane spans lie at Ser-205–Val-225, Leu-234–Val-254, Leu-263–Gly-283, and Leu-309–Ile-329.

Interacts with ATP1B1. Part of a complex containing ATP1B1, TRPV4, AQP4 and HEPACAM.

Its subcellular location is the membrane. It localises to the cell membrane. The protein resides in the cytoplasm. It is found in the perinuclear region. The protein localises to the endoplasmic reticulum. In terms of biological role, transmembrane protein mainly expressed in brain astrocytes that may play a role in transport across the blood-brain and brain-cerebrospinal fluid barriers. Regulates the response of astrocytes to hypo-osmosis by promoting calcium influx. May function as regulatory protein of membrane protein complexes such as ion channels. This chain is Membrane protein MLC1, found in Mus musculus (Mouse).